The following is a 239-amino-acid chain: uncharacterized protein (239 aa).

The HTH cro/C1-type domain occupies 13–66 (IEYLVDKLNGPSEFARKTGVTLSTITRWRKGEADPSRSNLVKIAEVTGVSIEWL). Residues 24 to 43 (SEFARKTGVTLSTITRWRKG) constitute a DNA-binding region (H-T-H motif).

This is an uncharacterized protein from Haemophilus influenzae (strain ATCC 51907 / DSM 11121 / KW20 / Rd).